A 439-amino-acid polypeptide reads, in one-letter code: Tol-Pal system protein TolB (439 aa).

A signal peptide spans 1-22; sequence MTKFPRWLAILVGLLFPLSALT.

It belongs to the TolB family. As to quaternary structure, the Tol-Pal system is composed of five core proteins: the inner membrane proteins TolA, TolQ and TolR, the periplasmic protein TolB and the outer membrane protein Pal. They form a network linking the inner and outer membranes and the peptidoglycan layer.

The protein localises to the periplasm. Functionally, part of the Tol-Pal system, which plays a role in outer membrane invagination during cell division and is important for maintaining outer membrane integrity. The protein is Tol-Pal system protein TolB of Xylella fastidiosa (strain M12).